An 81-amino-acid chain; its full sequence is MAHSVKIYDTCIGCTQCVRACPTDVLEMVPWDGCKASQIASAPRTEDCVGCKRCESACPTDFLSVRVYLGAETTRSMGLAY.

2 consecutive 4Fe-4S ferredoxin-type domains span residues 2–31 (AHSV…MVPW) and 39–68 (IASA…VRVY). Positions 11, 14, 17, 21, 48, 51, 54, and 58 each coordinate [4Fe-4S] cluster.

As to quaternary structure, the eukaryotic PSI reaction center is composed of at least 11 subunits. [4Fe-4S] cluster serves as cofactor.

The protein localises to the plastid. It is found in the chloroplast thylakoid membrane. It carries out the reaction reduced [plastocyanin] + hnu + oxidized [2Fe-2S]-[ferredoxin] = oxidized [plastocyanin] + reduced [2Fe-2S]-[ferredoxin]. Its function is as follows. Apoprotein for the two 4Fe-4S centers FA and FB of photosystem I (PSI); essential for photochemical activity. FB is the terminal electron acceptor of PSI, donating electrons to ferredoxin. The C-terminus interacts with PsaA/B/D and helps assemble the protein into the PSI complex. Required for binding of PsaD and PsaE to PSI. PSI is a plastocyanin-ferredoxin oxidoreductase, converting photonic excitation into a charge separation, which transfers an electron from the donor P700 chlorophyll pair to the spectroscopically characterized acceptors A0, A1, FX, FA and FB in turn. This is Photosystem I iron-sulfur center from Physcomitrium patens (Spreading-leaved earth moss).